The sequence spans 344 residues: MLQALLDSKDFLALTLAHPEQFDGEFSFNLGDHTQVEVWDTGVIVFEPIQNEGKDIVLSCGVHGNETAPIELCNSLIKQLLQQKIIAKQRTLFLIGNPLAINNGTRIIDENMNRLFSGEHSNPPGLVNPERVRAKKLEAYVDRFFTAAADGRQRIHYDLHTAMRASKHEKFAIYPYRPGRAFSGEQIMFLAASGVDTVLFHHEPTTTFSYFSSERYGADAFTIELGKVYPMGQNDMTRFIATHEMFMRLITAKPLELDAFDADKVNLYQVCRVINKHFDDFEFTFATDVENFRSFPKGFVLAREGGQEIKVEHEFESVVFPNAKVPIGNRTVICLIPAVNADVR.

3 residues coordinate Zn(2+): His-63, Glu-66, and His-160. Glu-224 is an active-site residue.

It belongs to the AspA/AstE family. Succinylglutamate desuccinylase subfamily. Zn(2+) is required as a cofactor.

The enzyme catalyses N-succinyl-L-glutamate + H2O = L-glutamate + succinate. The protein operates within amino-acid degradation; L-arginine degradation via AST pathway; L-glutamate and succinate from L-arginine: step 5/5. In terms of biological role, transforms N(2)-succinylglutamate into succinate and glutamate. This chain is Succinylglutamate desuccinylase, found in Shewanella putrefaciens (strain CN-32 / ATCC BAA-453).